The following is a 367-amino-acid chain: Alanine racemase (367 aa).

The active-site Proton acceptor; specific for D-alanine is lysine 40. Lysine 40 is subject to N6-(pyridoxal phosphate)lysine. A substrate-binding site is contributed by arginine 136. Tyrosine 263 (proton acceptor; specific for L-alanine) is an active-site residue. Residue methionine 310 coordinates substrate.

Belongs to the alanine racemase family. Pyridoxal 5'-phosphate serves as cofactor.

The enzyme catalyses L-alanine = D-alanine. It functions in the pathway amino-acid biosynthesis; D-alanine biosynthesis; D-alanine from L-alanine: step 1/1. In terms of biological role, catalyzes the interconversion of L-alanine and D-alanine. May also act on other amino acids. This is Alanine racemase (alr) from Streptococcus suis (strain 98HAH33).